The chain runs to 244 residues: MRKITFIAALLSLLPRYALAMHVMEGFLPFKWCLLWYSIYIPFLMAGLIYIKKNIAEEPSKKILLGFAGAFVFALSALKLPSVAGSSSHPTGIGLGAILLGPLPMAVIGGIVLLFQALLLAHGGITTLGANAFSMAVAGSFAAYGLYKVAGRVGLSKSASVFLGAASGDLMTYIITSLQLALAFPASRGGVAASFAGFSGIFAVTQLPLAIGEGILTVIVLNLLEIHAGVVVGRLVKGASNDEG.

A signal peptide spans 1 to 20; sequence MRKITFIAALLSLLPRYALA. Transmembrane regions (helical) follow at residues 31-51, 63-83, 95-115, 117-137, 161-181, and 201-221; these read KWCL…LIYI, ILLG…LPSV, LGAI…VLLF, ALLL…SMAV, VFLG…LQLA, and IFAV…VIVL.

Belongs to the CbiM family. In terms of assembly, forms an energy-coupling factor (ECF) transporter complex composed of an ATP-binding protein (A component, CbiO), a transmembrane protein (T component, CbiQ) and 2 possible substrate-capture proteins (S components, CbiM and CbiN) of unknown stoichimetry.

It is found in the cell membrane. The protein operates within cofactor biosynthesis; adenosylcobalamin biosynthesis. In terms of biological role, part of the energy-coupling factor (ECF) transporter complex CbiMNOQ involved in cobalt import. The protein is Cobalt transport protein CbiM of Thermosediminibacter oceani (strain ATCC BAA-1034 / DSM 16646 / JW/IW-1228P).